A 330-amino-acid polypeptide reads, in one-letter code: Aspartate--ammonia ligase (330 aa).

This sequence belongs to the class-II aminoacyl-tRNA synthetase family. AsnA subfamily.

The protein localises to the cytoplasm. It catalyses the reaction L-aspartate + NH4(+) + ATP = L-asparagine + AMP + diphosphate + H(+). The protein operates within amino-acid biosynthesis; L-asparagine biosynthesis; L-asparagine from L-aspartate (ammonia route): step 1/1. The chain is Aspartate--ammonia ligase from Edwardsiella ictaluri (strain 93-146).